Consider the following 205-residue polypeptide: Ribosomal RNA small subunit methyltransferase G (205 aa).

S-adenosyl-L-methionine-binding positions include Gly-70, Leu-75, 121-122 (IE), and Arg-136.

This sequence belongs to the methyltransferase superfamily. RNA methyltransferase RsmG family.

It is found in the cytoplasm. The catalysed reaction is guanosine(527) in 16S rRNA + S-adenosyl-L-methionine = N(7)-methylguanosine(527) in 16S rRNA + S-adenosyl-L-homocysteine. Functionally, specifically methylates the N7 position of guanine in position 527 of 16S rRNA. The protein is Ribosomal RNA small subunit methyltransferase G of Methylococcus capsulatus (strain ATCC 33009 / NCIMB 11132 / Bath).